Here is a 363-residue protein sequence, read N- to C-terminus: NAD(P)H-quinone oxidoreductase subunit 1, chloroplastic (363 aa).

The next 6 membrane-spanning stretches (helical) occupy residues 30-50 (LVPILTLVLAITIGVLVIVWL), 104-124 (IAVISIILSYSVIPFSYHLVL), 127-147 (LGIGVFLWIAVSSIAPIGLLM), 253-273 (FGLFYVASYLNLLVSSLFVTV), 300-320 (VFGTTMGMFITLAKTYLFLFI), and 343-363 (FLLPISLGNLLLTTSFQLLSL).

It belongs to the complex I subunit 1 family. As to quaternary structure, NDH is composed of at least 16 different subunits, 5 of which are encoded in the nucleus.

It localises to the plastid. It is found in the chloroplast thylakoid membrane. It carries out the reaction a plastoquinone + NADH + (n+1) H(+)(in) = a plastoquinol + NAD(+) + n H(+)(out). It catalyses the reaction a plastoquinone + NADPH + (n+1) H(+)(in) = a plastoquinol + NADP(+) + n H(+)(out). Functionally, NDH shuttles electrons from NAD(P)H:plastoquinone, via FMN and iron-sulfur (Fe-S) centers, to quinones in the photosynthetic chain and possibly in a chloroplast respiratory chain. The immediate electron acceptor for the enzyme in this species is believed to be plastoquinone. Couples the redox reaction to proton translocation, and thus conserves the redox energy in a proton gradient. The sequence is that of NAD(P)H-quinone oxidoreductase subunit 1, chloroplastic from Piper cenocladum (Ant piper).